Here is a 199-residue protein sequence, read N- to C-terminus: NAD(P)H dehydrogenase (quinone) (199 aa).

The Flavodoxin-like domain maps to 4-190 (MLVLYYSAYG…DGARFQGRRV (187 aa)). Residues 10 to 15 (SAYGHM) and 78 to 80 (TRY) contribute to the FMN site. Tyr12 contacts NAD(+). Substrate is bound at residue Trp98. Residues 113–119 (STATQYG) and His134 each bind FMN. Residues 161-181 (YGMTTTADGDGSRQPSAQELD) form a disordered region. The span at 163–177 (MTTTADGDGSRQPSA) shows a compositional bias: polar residues.

This sequence belongs to the WrbA family. FMN is required as a cofactor.

It carries out the reaction a quinone + NADH + H(+) = a quinol + NAD(+). The catalysed reaction is a quinone + NADPH + H(+) = a quinol + NADP(+). The sequence is that of NAD(P)H dehydrogenase (quinone) from Brucella canis (strain ATCC 23365 / NCTC 10854 / RM-666).